A 360-amino-acid chain; its full sequence is Ribosomal RNA large subunit methyltransferase F (360 aa).

The interval Met-1–Leu-38 is disordered. Residues Arg-10 to Pro-20 are compositionally biased toward basic residues.

Belongs to the methyltransferase superfamily. METTL16/RlmF family.

The protein localises to the cytoplasm. The catalysed reaction is adenosine(1618) in 23S rRNA + S-adenosyl-L-methionine = N(6)-methyladenosine(1618) in 23S rRNA + S-adenosyl-L-homocysteine + H(+). Its function is as follows. Specifically methylates the adenine in position 1618 of 23S rRNA. In Shewanella frigidimarina (strain NCIMB 400), this protein is Ribosomal RNA large subunit methyltransferase F.